Here is a 566-residue protein sequence, read N- to C-terminus: MQARRLAKRPSLGSRRGGAAPAPAPEAAALGLPPPGPSPAAAPGSWRPPLPPPRGTGPSRAAAASSPVLLLLGEEDEDEEGAGRRRRTRGRVTEKPRGVAEEEDDDEEEDEEVVVEVVDGDEDDEDAEERFVPLGPGRALPKGPARGAVKVGSFKREMTFTFQSEDFRRDSSKKPSHHLFPLAMEEDVRTADTKKTSRVLDQEKETRSVCLLEQKRKVVSSNIDVPPARKSSEELDMDKVTAAMVLTSLSTSPLVRSPPVRPNEGLSGSWKEGAPSSSSSSGYWSWSAPSDQSNPSTPSPPLSADSFKPFRSPAPPDDGIDEADASNLLFDEPIPRKRKNSMKVMFKCLWKSCGKVLNTAAGIQKHIRAVHLGRVGESDCSDGEEDFYYTEIKLNTDATAEGLNTVAPVSPSQSLASAPAFPIPDSSRTETPCAKTDTKLVTPLSRSAPTTLYLVHTDHAYQATPPVTIPGSAKFTPNGSSFSISWQSPPVTFTGVPVSPPHHPTAGSGEQRQHAHTALSSPPRGTVTLRKPRGEGKKCRKVYGMENRDMWCTACRWKKACQRFID.

3 disordered regions span residues 1 to 148 (MQAR…ARGA), 166 to 203 (DFRR…LDQE), and 253 to 324 (PLVR…DEAD). Over residues 12-31 (LGSRRGGAAPAPAPEAAALG) the composition is skewed to low complexity. The segment covering 32-55 (LPPPGPSPAAAPGSWRPPLPPPRG) has biased composition (pro residues). Over residues 56–72 (TGPSRAAAASSPVLLLL) the composition is skewed to low complexity. Residues 91 to 100 (RVTEKPRGVA) show a composition bias toward basic and acidic residues. Acidic residues predominate over residues 101-128 (EEEDDDEEEDEEVVVEVVDGDEDDEDAE). Positions 186–203 (EDVRTADTKKTSRVLDQE) are enriched in basic and acidic residues. Low complexity predominate over residues 267–290 (SGSWKEGAPSSSSSSGYWSWSAPS). The C2H2-type zinc finger occupies 346–371 (FKCLWKSCGKVLNTAAGIQKHIRAVH). 2 positions are modified to phosphoserine: S378 and S381. 2 disordered regions span residues 409–436 (VSPS…CAKT) and 497–535 (PVSP…PRGE). Residues 471-566 (GSAKFTPNGS…WKKACQRFID (96 aa)) are sufficient for binding to RE2 sequence motifs. Positions 537–541 (KKCRK) match the CR1 motif. Positions 555-559 (CRWKK) match the CR2 motif.

It is found in the nucleus. Functionally, transcription factor which binds to RE2 sequence elements in the MYOD1 enhancer. The sequence is that of Zinc finger protein 704 from Mus musculus (Mouse).